A 99-amino-acid chain; its full sequence is Large ribosomal subunit protein uL23 (99 aa).

It belongs to the universal ribosomal protein uL23 family. Part of the 50S ribosomal subunit. Contacts protein L29, and trigger factor when it is bound to the ribosome.

Its function is as follows. One of the early assembly proteins it binds 23S rRNA. One of the proteins that surrounds the polypeptide exit tunnel on the outside of the ribosome. Forms the main docking site for trigger factor binding to the ribosome. The polypeptide is Large ribosomal subunit protein uL23 (Oenococcus oeni (strain ATCC BAA-331 / PSU-1)).